The following is a 95-amino-acid chain: DNA-directed RNA polymerase subunit Rpo11 (95 aa).

Belongs to the archaeal Rpo11/eukaryotic RPB11/RPC19 RNA polymerase subunit family. Part of the RNA polymerase complex.

It is found in the cytoplasm. It catalyses the reaction RNA(n) + a ribonucleoside 5'-triphosphate = RNA(n+1) + diphosphate. Its function is as follows. DNA-dependent RNA polymerase (RNAP) catalyzes the transcription of DNA into RNA using the four ribonucleoside triphosphates as substrates. The sequence is that of DNA-directed RNA polymerase subunit Rpo11 from Pyrococcus horikoshii (strain ATCC 700860 / DSM 12428 / JCM 9974 / NBRC 100139 / OT-3).